The following is a 574-amino-acid chain: Sulfate adenylyltransferase (574 aa).

Positions 1-169 are N-terminal; that stretch reads MANSPHGGVL…IEAVNKLNHY (169 aa). A catalytic region spans residues 170–394; the sequence is DYVALRYSPA…LRESSPPRAT (225 aa). Gln197 serves as a coordination point for sulfate. ATP contacts are provided by residues 197–200 and 291–294; these read QTRN and GRDH. Residues Thr198, Arg199, and Asn200 contribute to the active site. Arg199 provides a ligand contact to sulfate. Ala295 serves as a coordination point for sulfate. Val333 is an ATP binding site. The allosteric regulation domain; adenylyl-sulfate kinase-like stretch occupies residues 395–574; that stretch reads QGFTIFLTGY…LESEGYFDRL (180 aa). Residues 434–437, Arg451, 477–478, and Arg516 contribute to the 3'-phosphoadenylyl sulfate site; these read DTVR and IA.

The protein in the N-terminal section; belongs to the sulfate adenylyltransferase family. This sequence in the C-terminal section; belongs to the APS kinase family. As to quaternary structure, homohexamer. Dimer of trimers.

Its subcellular location is the cytoplasm. It catalyses the reaction sulfate + ATP + H(+) = adenosine 5'-phosphosulfate + diphosphate. The protein operates within sulfur metabolism; hydrogen sulfide biosynthesis; sulfite from sulfate: step 1/3. Its activity is regulated as follows. Allosterically inhibited by 3'-phosphoadenosine 5'-phosphosulfate (PAPS). Catalyzes the first intracellular reaction of sulfate assimilation, forming adenosine-5'-phosphosulfate (APS) from inorganic sulfate and ATP. Plays an important role in sulfate activation as a component of the biosynthesis pathway of sulfur-containing amino acids. This Aspergillus terreus (strain NIH 2624 / FGSC A1156) protein is Sulfate adenylyltransferase.